A 336-amino-acid polypeptide reads, in one-letter code: Cycloartenol-C-24-methyltransferase (336 aa).

At methionine 1 the chain carries N-acetylmethionine.

The protein belongs to the class I-like SAM-binding methyltransferase superfamily. Erg6/SMT family. As to expression, highly expressed in vascular tissue, mature leaves and in regions undergoing cellular expansion.

The catalysed reaction is cycloartenol + S-adenosyl-L-methionine = 24-methylenecycloartanol + S-adenosyl-L-homocysteine + H(+). Its pathway is steroid biosynthesis; sterol biosynthesis. Its function is as follows. Catalyzes the methyl transfer from S-adenosyl-methionine to the C-24 of cycloartenol to form 24-methylene cycloartenol. The sequence is that of Cycloartenol-C-24-methyltransferase (SMT1) from Arabidopsis thaliana (Mouse-ear cress).